Consider the following 144-residue polypeptide: Heme transporter hrg1-B (144 aa).

4 consecutive transmembrane segments (helical) span residues 6 to 26, 38 to 58, 71 to 91, and 107 to 127; these read IYISVGYSTFGMLVGFSAFIV, AMGGLSGVLALWALVTHIMYI, FFMFVSSVFSLLAVAAFATFI, and FYLSAVWSFMTLKWAFLLGLY. The Di-leucine motif motif lies at 140–141; sequence IL.

It belongs to the HRG family.

It is found in the endosome membrane. It localises to the lysosome membrane. Its subcellular location is the cytoplasmic vesicle. The protein localises to the phagosome membrane. It carries out the reaction heme b(in) = heme b(out). Heme transporter that regulates intracellular heme availability through the endosomal or lysosomal compartment. In macrophages, is the heme transporter for heme-iron recycling. Essential for macrophage iron homeostasis, transports heme from the phagolysosome to the cytoplasm during erythrophagocytosis (EP). This is Heme transporter hrg1-B (slc48a1a) from Danio rerio (Zebrafish).